The following is a 518-amino-acid chain: 2,3-bisphosphoglycerate-independent phosphoglycerate mutase (518 aa).

The Mn(2+) site is built by Asp-14 and Ser-64. Catalysis depends on Ser-64, which acts as the Phosphoserine intermediate. Substrate contacts are provided by residues His-125, 155 to 156 (RD), Arg-187, Arg-193, 264 to 267 (RPDR), and Lys-337. Positions 404, 408, 445, 446, and 467 each coordinate Mn(2+).

It belongs to the BPG-independent phosphoglycerate mutase family. Mn(2+) serves as cofactor.

It catalyses the reaction (2R)-2-phosphoglycerate = (2R)-3-phosphoglycerate. Its pathway is carbohydrate degradation; glycolysis; pyruvate from D-glyceraldehyde 3-phosphate: step 3/5. Its function is as follows. Catalyzes the interconversion of 2-phosphoglycerate and 3-phosphoglycerate. This is 2,3-bisphosphoglycerate-independent phosphoglycerate mutase from Methanococcoides burtonii (strain DSM 6242 / NBRC 107633 / OCM 468 / ACE-M).